Consider the following 817-residue polypeptide: Myosin-A (817 aa).

Residue Ser-19 is modified to Phosphoserine. The 675-residue stretch at 97–771 folds into the Myosin motor domain; sequence MSFGDIGLLN…GAKMLSKIQR (675 aa). 191–198 lines the ATP pocket; that stretch reads GESGAGKT. Positions 661–671 are actin-binding; that stretch reads PHFIRCIKPNE. The tract at residues 773 to 817 is tail; it reads KLVEWENCVSVIEAAIMKYKHKQNVENNVSSLMRVQAHIRKRMVA.

It belongs to the TRAFAC class myosin-kinesin ATPase superfamily. Myosin family. As to quaternary structure, interacts with ACT1.

Its subcellular location is the cell membrane. In terms of biological role, myosins are actin-based motor molecules with ATPase activity. Unconventional myosins serve in intracellular movements. Their highly divergent tails are presumed to bind to membranous compartments, which would be moved relative to actin filaments. The sequence is that of Myosin-A from Plasmodium yoelii yoelii.